The primary structure comprises 323 residues: o-succinylbenzoate synthase (323 aa).

K134 functions as the Proton donor in the catalytic mechanism. Residues D162, E191, and D214 each coordinate Mg(2+). K236 functions as the Proton acceptor in the catalytic mechanism.

Belongs to the mandelate racemase/muconate lactonizing enzyme family. MenC type 1 subfamily. A divalent metal cation serves as cofactor.

The catalysed reaction is (1R,6R)-6-hydroxy-2-succinyl-cyclohexa-2,4-diene-1-carboxylate = 2-succinylbenzoate + H2O. The protein operates within quinol/quinone metabolism; 1,4-dihydroxy-2-naphthoate biosynthesis; 1,4-dihydroxy-2-naphthoate from chorismate: step 4/7. It functions in the pathway quinol/quinone metabolism; menaquinone biosynthesis. Functionally, converts 2-succinyl-6-hydroxy-2,4-cyclohexadiene-1-carboxylate (SHCHC) to 2-succinylbenzoate (OSB). In Edwardsiella ictaluri (strain 93-146), this protein is o-succinylbenzoate synthase.